The sequence spans 282 residues: 1-deoxy-11-beta-hydroxypentalenate dehydrogenase (282 aa).

12 to 36 contacts NAD(+); that stretch reads GAASGIGLALSARFARAGAGVVMAD. Ser144 is a binding site for substrate. Tyr157 (proton acceptor) is an active-site residue. Lys161 serves as a coordination point for NAD(+). The segment at 258 to 282 is disordered; sequence PPPSPEEELWPVPKTTTATTATTKH. Over residues 267 to 282 the composition is skewed to low complexity; sequence WPVPKTTTATTATTKH.

Belongs to the short-chain dehydrogenases/reductases (SDR) family.

It catalyses the reaction 1-deoxy-11beta-hydroxypentalenate + NAD(+) = 1-deoxy-11-oxopentalenate + NADH + H(+). The protein operates within antibiotic biosynthesis; pentalenolactone biosynthesis. Functionally, catalyzes the oxidation of 1-deoxy-11-beta-hydroxypentalenic acid to 1-deoxy-11-oxopentalenic acid in the biosynthesis of pentalenolactone antibiotic. This chain is 1-deoxy-11-beta-hydroxypentalenate dehydrogenase (pntF), found in Streptomyces arenae.